The sequence spans 156 residues: Small ribosomal subunit protein uS7 (156 aa).

The protein belongs to the universal ribosomal protein uS7 family. As to quaternary structure, part of the 30S ribosomal subunit. Contacts proteins S9 and S11.

Its function is as follows. One of the primary rRNA binding proteins, it binds directly to 16S rRNA where it nucleates assembly of the head domain of the 30S subunit. Is located at the subunit interface close to the decoding center, probably blocks exit of the E-site tRNA. This is Small ribosomal subunit protein uS7 from Beutenbergia cavernae (strain ATCC BAA-8 / DSM 12333 / CCUG 43141 / JCM 11478 / NBRC 16432 / NCIMB 13614 / HKI 0122).